A 246-amino-acid chain; its full sequence is tRNA pseudouridine synthase A (246 aa).

Asp52 acts as the Nucleophile in catalysis. Tyr111 provides a ligand contact to substrate.

This sequence belongs to the tRNA pseudouridine synthase TruA family. In terms of assembly, homodimer.

The enzyme catalyses uridine(38/39/40) in tRNA = pseudouridine(38/39/40) in tRNA. In terms of biological role, formation of pseudouridine at positions 38, 39 and 40 in the anticodon stem and loop of transfer RNAs. The polypeptide is tRNA pseudouridine synthase A (Borrelia garinii subsp. bavariensis (strain ATCC BAA-2496 / DSM 23469 / PBi) (Borreliella bavariensis)).